The primary structure comprises 749 residues: Protein SWAP (749 aa).

Residues 8 to 124 (SNVHVQEYKD…RNDQRNAIGF (117 aa)) are dry CEEERYL. Basic and acidic residues predominate over residues 105-118 (EQEKEEEEKRRNDQ). A disordered region spans residues 105–149 (EQEKEEEEKRRNDQRNAIGFDYGTGKVKARESDSEDEPFEPPEGI). An SURP motif 1 repeat occupies 166 to 209 (IIEKTASFIVANGTQMEIVIKAKQRNNAEQFGFLEFDHRLNPFY). Positions 256–310 (HGSDSEDSDSDYELHPSLLSGGAKRPVTPEKPGAIGPRKKPVEPEKPPDFTLKPV) are disordered. The SURP motif 2 repeat unit spans residues 391–431 (ILNSYAEHVAQRGLEAEASLAAREDLQLHFMEPKSPYYSYY). Low complexity predominate over residues 458 to 478 (PAPPSAVSSPGPSSLMSLNLS). Disordered regions lie at residues 458 to 498 (PAPP…SSRL), 537 to 592 (LRND…QVDR), and 608 to 749 (KAKK…DRRR). Residues 538 to 552 (RNDEPRDESSFRFDP) show a composition bias toward basic and acidic residues. The span at 560-569 (PSDTTANFSD) shows a compositional bias: polar residues. Pro residues predominate over residues 574–583 (FPPPTPPVIP). Composition is skewed to basic and acidic residues over residues 608–659 (KAKK…RSLD) and 679–689 (EEMKRTDEDRE). Basic residues-rich tracts occupy residues 690 to 704 (RKRH…RRSR) and 714 to 749 (EHKK…DRRR).

It is a regulator of pre-mRNA splicing (and, possibly, of other RNA processing events). It may regulate its own expression at the level of RNA processing. This chain is Protein SWAP (swp-1), found in Caenorhabditis elegans.